We begin with the raw amino-acid sequence, 254 residues long: MPAKTPIYLKAANNKKGKKFKLRDILSPDMISPPLGDFRHTIHIGKEGQHDVFGDISFLQGNYELLPGNQEKAHSGQFPGHNDFFRANSTSDSMFTETPSPVLKNAISLPTIGGSQALMLPLLSPVTFHSKQESFGRPKLPRLSCEPVMEEKVQEQSSLLENGAVHQGDTSWGSSGSGSQSSQGRDSHSSSLSEQSSDWPADDMFEHPASCELVKSKTKSEESFSDLTGSLLSLQLDLGPSLLDEVLNVMDKNK.

Residues Ile-31–Gly-45 enclose the CRIB domain. Tyr-63 carries the phosphotyrosine modification. Residues Ser-89, Ser-108, and Ser-144 each carry the phosphoserine modification. The interval Val-165 to Phe-205 is disordered. Positions Ser-171–Ser-197 are enriched in low complexity.

The protein belongs to the BORG/CEP family. Interacts with RHOQ and CDC42, in a GTP-dependent manner, and with SEPT7.

Its subcellular location is the endomembrane system. It is found in the cytoplasm. The protein localises to the cytoskeleton. Probably involved in the organization of the actin cytoskeleton. May act downstream of CDC42 to induce actin filament assembly leading to cell shape changes. Induces pseudopodia formation in fibroblasts. The polypeptide is Cdc42 effector protein 3 (Cdc42ep3) (Mus musculus (Mouse)).